A 141-amino-acid polypeptide reads, in one-letter code: Nucleoside triphosphatase NudI (141 aa).

Positions 1-141 (MRQRTIVCPL…RKTLRLKGLL (141 aa)) constitute a Nudix hydrolase domain. The short motif at 38 to 59 (GGVEPGERIEEALRREIREELG) is the Nudix box element.

The protein belongs to the Nudix hydrolase family. NudI subfamily. Monomer. Mg(2+) is required as a cofactor.

It carries out the reaction a ribonucleoside 5'-triphosphate + H2O = a ribonucleoside 5'-phosphate + diphosphate + H(+). The enzyme catalyses a 2'-deoxyribonucleoside 5'-triphosphate + H2O = a 2'-deoxyribonucleoside 5'-phosphate + diphosphate + H(+). The catalysed reaction is dUTP + H2O = dUMP + diphosphate + H(+). It catalyses the reaction dTTP + H2O = dTMP + diphosphate + H(+). It carries out the reaction dCTP + H2O = dCMP + diphosphate + H(+). Functionally, catalyzes the hydrolysis of nucleoside triphosphates, with a preference for pyrimidine deoxynucleoside triphosphates (dUTP, dTTP and dCTP). This Escherichia coli O6:K15:H31 (strain 536 / UPEC) protein is Nucleoside triphosphatase NudI.